A 143-amino-acid chain; its full sequence is Putative pre-16S rRNA nuclease (143 aa).

Belongs to the YqgF nuclease family.

Its subcellular location is the cytoplasm. Its function is as follows. Could be a nuclease involved in processing of the 5'-end of pre-16S rRNA. The protein is Putative pre-16S rRNA nuclease of Lactobacillus johnsonii (strain CNCM I-12250 / La1 / NCC 533).